Consider the following 226-residue polypeptide: Late protein I226R (226 aa).

The first 16 residues, 1–16 (MKMETFLVCLFHNAAG), serve as a signal peptide directing secretion. N-linked (GlcNAc...) asparagine; by host glycosylation is present at Asn-164.

It belongs to the asfivirus I226R family.

Functionally, plays a role in the inhibition of host NF-kappa-B and IRF3 signaling pathways. Mechanistically, promotes the degradation of host IKBKG through enhancing its ubiquitination leading to inhibition of both pathways. The sequence is that of Late protein I226R from African swine fever virus (isolate Pig/Kenya/KEN-50/1950) (ASFV).